We begin with the raw amino-acid sequence, 206 residues long: RNA pyrophosphohydrolase (206 aa).

The Nudix hydrolase domain maps to 6-150 (GYRPNVGIVI…KRDVYRKVMK (145 aa)). A Nudix box motif is present at residues 38-59 (GGINEGENIETAMYRELYEEVG). Positions 162-191 (KPETVEKPRVERTEKRDFQKRDNQKREFRK) are enriched in basic and acidic residues. The tract at residues 162–206 (KPETVEKPRVERTEKRDFQKRDNQKREFRKSARTWNNSHQKGKAQ) is disordered.

It belongs to the Nudix hydrolase family. RppH subfamily. Requires a divalent metal cation as cofactor.

In terms of biological role, accelerates the degradation of transcripts by removing pyrophosphate from the 5'-end of triphosphorylated RNA, leading to a more labile monophosphorylated state that can stimulate subsequent ribonuclease cleavage. This chain is RNA pyrophosphohydrolase, found in Actinobacillus pleuropneumoniae serotype 3 (strain JL03).